A 148-amino-acid chain; its full sequence is HTH-type transcriptional regulator BilQ (148 aa).

The HTH marR-type domain maps to 1 to 140 (MDFKNLQYES…LVKNLHVVKD (140 aa)). A DNA-binding region (H-T-H motif) is located at residues 54–77 (LNDVSTEFEVDKAHTTRTISRLEQ).

Its function is as follows. Transcription regulator that regulates expression of the bilirubin reductase operon (bilQ, bilR and bilS). The protein is HTH-type transcriptional regulator BilQ of Clostridioides difficile (strain CD3).